Consider the following 217-residue polypeptide: Probable transaldolase (217 aa).

The active-site Schiff-base intermediate with substrate is the Lys-83.

The protein belongs to the transaldolase family. Type 3B subfamily.

Its subcellular location is the cytoplasm. It catalyses the reaction D-sedoheptulose 7-phosphate + D-glyceraldehyde 3-phosphate = D-erythrose 4-phosphate + beta-D-fructose 6-phosphate. It participates in carbohydrate degradation; pentose phosphate pathway; D-glyceraldehyde 3-phosphate and beta-D-fructose 6-phosphate from D-ribose 5-phosphate and D-xylulose 5-phosphate (non-oxidative stage): step 2/3. In terms of biological role, transaldolase is important for the balance of metabolites in the pentose-phosphate pathway. The chain is Probable transaldolase from Paracoccus denitrificans (strain Pd 1222).